A 271-amino-acid polypeptide reads, in one-letter code: Sec-independent protein translocase protein TatC (271 aa).

6 consecutive transmembrane segments (helical) span residues 35-55 (IIWTFVYIAAGFGVCWWWHEQ), 93-113 (AFIAGLFVASPFVLYQVWLFI), 124-144 (YVLPFMFSTVLLFLGGGVFGY), 178-198 (IILGLGIVFEMPILVFFLALM), 213-233 (SILVIFVIAAIITPTTDIMNM), and 234-254 (CVFAAPMILLYILSIGVAFLV).

The protein belongs to the TatC family. In terms of assembly, forms a complex with TatA.

It is found in the cell inner membrane. In terms of biological role, part of the twin-arginine translocation (Tat) system that transports large folded proteins containing a characteristic twin-arginine motif in their signal peptide across membranes. This chain is Sec-independent protein translocase protein TatC, found in Koribacter versatilis (strain Ellin345).